The primary structure comprises 493 residues: Glutamyl-tRNA(Gln) amidotransferase subunit A (493 aa).

Residues lysine 78 and serine 158 each act as charge relay system in the active site. Serine 182 functions as the Acyl-ester intermediate in the catalytic mechanism.

Belongs to the amidase family. GatA subfamily. Heterotrimer of A, B and C subunits.

The enzyme catalyses L-glutamyl-tRNA(Gln) + L-glutamine + ATP + H2O = L-glutaminyl-tRNA(Gln) + L-glutamate + ADP + phosphate + H(+). Functionally, allows the formation of correctly charged Gln-tRNA(Gln) through the transamidation of misacylated Glu-tRNA(Gln) in organisms which lack glutaminyl-tRNA synthetase. The reaction takes place in the presence of glutamine and ATP through an activated gamma-phospho-Glu-tRNA(Gln). This chain is Glutamyl-tRNA(Gln) amidotransferase subunit A, found in Rickettsia africae (strain ESF-5).